Here is a 204-residue protein sequence, read N- to C-terminus: Glycerol-3-phosphate acyltransferase (204 aa).

The next 5 membrane-spanning stretches (helical) occupy residues 8-28 (ILIF…CYIF), 53-73 (VPAA…VVIA), 81-101 (FITA…IFFG), 116-136 (FGFS…VAII), and 155-175 (VIFT…IIIL).

Belongs to the PlsY family. In terms of assembly, probably interacts with PlsX.

It is found in the cell inner membrane. The enzyme catalyses an acyl phosphate + sn-glycerol 3-phosphate = a 1-acyl-sn-glycero-3-phosphate + phosphate. Its pathway is lipid metabolism; phospholipid metabolism. Functionally, catalyzes the transfer of an acyl group from acyl-phosphate (acyl-PO(4)) to glycerol-3-phosphate (G3P) to form lysophosphatidic acid (LPA). This enzyme utilizes acyl-phosphate as fatty acyl donor, but not acyl-CoA or acyl-ACP. This chain is Glycerol-3-phosphate acyltransferase, found in Francisella tularensis subsp. mediasiatica (strain FSC147).